A 507-amino-acid polypeptide reads, in one-letter code: Histidine--tRNA ligase (507 aa).

The protein belongs to the class-II aminoacyl-tRNA synthetase family. Homodimer.

It is found in the cytoplasm. It catalyses the reaction tRNA(His) + L-histidine + ATP = L-histidyl-tRNA(His) + AMP + diphosphate + H(+). The sequence is that of Histidine--tRNA ligase from Rhizobium leguminosarum bv. trifolii (strain WSM2304).